Reading from the N-terminus, the 224-residue chain is Peroxiredoxin-6 (224 aa).

One can recognise a Thioredoxin domain in the interval Leu-5 to Leu-169. Residues Asp-31–Pro-40 form a required and sufficient for targeting to lysosomes and lamellar bodies region. At Thr-44 the chain carries Phosphothreonine. The active-site Cysteine sulfenic acid (-SOH) intermediate; for peroxidase activity is the Cys-47. The residue at position 63 (Lys-63) is an N6-acetyllysine. At Tyr-89 the chain carries Phosphotyrosine. Thr-93 is subject to Phosphothreonine. Asp-140 acts as the For phospholipase activity in catalysis. Thr-177 bears the Phosphothreonine; by MAPK mark. Position 209 is an N6-acetyllysine; alternate (Lys-209). The residue at position 209 (Lys-209) is an N6-succinyllysine; alternate.

The protein belongs to the peroxiredoxin family. Prx6 subfamily. As to quaternary structure, homodimer. Interacts with GSTP1; mediates PRDX6 glutathionylation and regeneration. Interacts with APEX1. Interacts with STH. May interact with FAM168B. May interact with HTR2A. Irreversibly inactivated by overoxidation of Cys-47 to sulfinic acid (Cys-SO(2)H) and sulfonic acid (Cys-SO(3)H) forms upon oxidative stress. In terms of processing, phosphorylation at Thr-177 by MAP kinases increases the phospholipase activity of the enzyme. The phosphorylated form exhibits a greater lysophosphatidylcholine acyltransferase activity compared to the non-phosphorylated form. As to expression, highly expressed in heart, kidney and liver. Moderate expression in brain and stomach. Very low levels in intestine.

It localises to the cytoplasm. The protein localises to the lysosome. The catalysed reaction is a hydroperoxide + 2 glutathione = an alcohol + glutathione disulfide + H2O. It carries out the reaction a 1,2-diacyl-sn-glycero-3-phosphocholine + H2O = a 1-acyl-sn-glycero-3-phosphocholine + a fatty acid + H(+). It catalyses the reaction a 1-acyl-sn-glycero-3-phosphocholine + an acyl-CoA = a 1,2-diacyl-sn-glycero-3-phosphocholine + CoA. The enzyme catalyses 1-hexadecanoyl-sn-glycero-3-phosphocholine + hexadecanoyl-CoA = 1,2-dihexadecanoyl-sn-glycero-3-phosphocholine + CoA. The catalysed reaction is 1,2-dihexadecanoyl-sn-glycero-3-phosphocholine + H2O = 1-hexadecanoyl-sn-glycero-3-phosphocholine + hexadecanoate + H(+). With respect to regulation, MJ33 or lithium;[(2R)-1-hexadecoxy-3-(2,2,2-trifluoroethoxy)propan-2-yl] methyl phosphate inhibits its phospholipase A2 activity. CI-976 or 2,2-Dimethyl-N-(2,4,6-trimethoxyphenyl)dodecanamide inhibits its lysophosphatidylcholine acyltransferase activity. Its function is as follows. Thiol-specific peroxidase that catalyzes the reduction of hydrogen peroxide and organic hydroperoxides to water and alcohols, respectively. Can reduce H(2)O(2) and short chain organic, fatty acid, and phospholipid hydroperoxides. Has phospholipase activity. Can either reduce the oxidized sn-2 fatty acyl group of phospholipids (peroxidase activity) or hydrolyze the sn-2 ester bond of phospholipids (phospholipase activity). These activities are dependent on binding to phospholipids at acidic pH and to oxidized phospholipds at cytosolic pH. Plays a role in cell protection against oxidative stress by detoxifying peroxides and in phospholipid homeostasis. Exhibits acyl-CoA-dependent lysophospholipid acyltransferase which mediates the conversion of lysophosphatidylcholine (1-acyl-sn-glycero-3-phosphocholine or LPC) into phosphatidylcholine (1,2-diacyl-sn-glycero-3-phosphocholine or PC). Shows a clear preference for LPC as the lysophospholipid and for palmitoyl CoA as the fatty acyl substrate. In Mus musculus (Mouse), this protein is Peroxiredoxin-6 (Prdx6).